Consider the following 380-residue polypeptide: 4-hydroxy-3-methylbut-2-en-1-yl diphosphate synthase (flavodoxin) (380 aa).

[4Fe-4S] cluster-binding residues include cysteine 275, cysteine 278, cysteine 310, and glutamate 317.

It belongs to the IspG family. [4Fe-4S] cluster is required as a cofactor.

It carries out the reaction (2E)-4-hydroxy-3-methylbut-2-enyl diphosphate + oxidized [flavodoxin] + H2O + 2 H(+) = 2-C-methyl-D-erythritol 2,4-cyclic diphosphate + reduced [flavodoxin]. Its pathway is isoprenoid biosynthesis; isopentenyl diphosphate biosynthesis via DXP pathway; isopentenyl diphosphate from 1-deoxy-D-xylulose 5-phosphate: step 5/6. Converts 2C-methyl-D-erythritol 2,4-cyclodiphosphate (ME-2,4cPP) into 1-hydroxy-2-methyl-2-(E)-butenyl 4-diphosphate. This chain is 4-hydroxy-3-methylbut-2-en-1-yl diphosphate synthase (flavodoxin), found in Hyphomonas neptunium (strain ATCC 15444).